The chain runs to 49 residues: Large ribosomal subunit protein bL33B (49 aa).

The protein belongs to the bacterial ribosomal protein bL33 family.

The polypeptide is Large ribosomal subunit protein bL33B (rpmG2) (Lactococcus lactis subsp. cremoris (Streptococcus cremoris)).